A 309-amino-acid chain; its full sequence is NAD kinase (309 aa).

D89 serves as the catalytic Proton acceptor. NAD(+) is bound by residues D89 to G90, N163 to E164, H174, R191, D193, and T204 to S209.

It belongs to the NAD kinase family. The cofactor is a divalent metal cation.

The protein resides in the cytoplasm. The catalysed reaction is NAD(+) + ATP = ADP + NADP(+) + H(+). Involved in the regulation of the intracellular balance of NAD and NADP, and is a key enzyme in the biosynthesis of NADP. Catalyzes specifically the phosphorylation on 2'-hydroxyl of the adenosine moiety of NAD to yield NADP. In Shewanella denitrificans (strain OS217 / ATCC BAA-1090 / DSM 15013), this protein is NAD kinase.